The sequence spans 250 residues: Isoprenyl transferase (250 aa).

Residue aspartate 27 is part of the active site. Aspartate 27 contacts Mg(2+). Residues glycine 28–arginine 31, tryptophan 32, histidine 48, and serine 76–glutamate 78 contribute to the substrate site. Asparagine 79 serves as the catalytic Proton acceptor. Residues phenylalanine 80, arginine 82, arginine 199, and arginine 205 to serine 207 contribute to the substrate site. Glutamate 218 contributes to the Mg(2+) binding site.

Belongs to the UPP synthase family. Homodimer. The cofactor is Mg(2+).

In terms of biological role, catalyzes the condensation of isopentenyl diphosphate (IPP) with allylic pyrophosphates generating different type of terpenoids. In Chlamydia caviae (strain ATCC VR-813 / DSM 19441 / 03DC25 / GPIC) (Chlamydophila caviae), this protein is Isoprenyl transferase.